The chain runs to 163 residues: ATP synthase subunit b, sodium ion specific (163 aa).

The helical transmembrane segment at 9-29 threads the bilayer; it reads VSIDINMFWQIINFLILMFFF.

The protein belongs to the ATPase B chain family. As to quaternary structure, F-type ATPases have 2 components, F(1) - the catalytic core - and F(0) - the membrane proton channel. F(1) has five subunits: alpha(3), beta(3), gamma(1), delta(1), epsilon(1). F(0) has three main subunits: a(1), b(2) and c(10-14). The alpha and beta chains form an alternating ring which encloses part of the gamma chain. F(1) is attached to F(0) by a central stalk formed by the gamma and epsilon chains, while a peripheral stalk is formed by the delta and b chains.

It localises to the cell inner membrane. Functionally, f(1)F(0) ATP synthase produces ATP from ADP in the presence of a proton or sodium gradient. F-type ATPases consist of two structural domains, F(1) containing the extramembraneous catalytic core and F(0) containing the membrane proton channel, linked together by a central stalk and a peripheral stalk. During catalysis, ATP synthesis in the catalytic domain of F(1) is coupled via a rotary mechanism of the central stalk subunits to proton translocation. Component of the F(0) channel, it forms part of the peripheral stalk, linking F(1) to F(0). The sequence is that of ATP synthase subunit b, sodium ion specific (atpF) from Ilyobacter tartaricus.